The sequence spans 189 residues: GTP cyclohydrolase 1 (189 aa).

Zn(2+) is bound by residues C78, H81, and C150.

This sequence belongs to the GTP cyclohydrolase I family. In terms of assembly, toroid-shaped homodecamer, composed of two pentamers of five dimers.

The catalysed reaction is GTP + H2O = 7,8-dihydroneopterin 3'-triphosphate + formate + H(+). It participates in cofactor biosynthesis; 7,8-dihydroneopterin triphosphate biosynthesis; 7,8-dihydroneopterin triphosphate from GTP: step 1/1. In Listeria monocytogenes serovar 1/2a (strain ATCC BAA-679 / EGD-e), this protein is GTP cyclohydrolase 1.